A 294-amino-acid chain; its full sequence is uncharacterized protein (294 aa).

The segment at 1–215 (MTTAITPDKK…DQDDDDQKDL (215 aa)) is disordered. 2 stretches are compositionally biased toward basic residues: residues 27 to 43 (TKPR…KSKK) and 50 to 78 (AKKR…KKAP). Positions 79 to 88 (MKAPSKPAAK) are enriched in low complexity. Residues 92-102 (QQAQASLQKPI) are compositionally biased toward polar residues. Over residues 118 to 136 (PRPPTPIPPTGVKPEPAPR) the composition is skewed to pro residues. The segment covering 145 to 160 (SVSSTTPRTSATTGTT) has biased composition (low complexity).

This is an uncharacterized protein from Caenorhabditis elegans.